Here is a 149-residue protein sequence, read N- to C-terminus: D-aminoacyl-tRNA deacylase (149 aa).

The Gly-cisPro motif, important for rejection of L-amino acids motif lies at 137–138; that stretch reads GP.

It belongs to the DTD family. Homodimer.

The protein localises to the cytoplasm. The enzyme catalyses glycyl-tRNA(Ala) + H2O = tRNA(Ala) + glycine + H(+). It catalyses the reaction a D-aminoacyl-tRNA + H2O = a tRNA + a D-alpha-amino acid + H(+). Its function is as follows. An aminoacyl-tRNA editing enzyme that deacylates mischarged D-aminoacyl-tRNAs. Also deacylates mischarged glycyl-tRNA(Ala), protecting cells against glycine mischarging by AlaRS. Acts via tRNA-based rather than protein-based catalysis; rejects L-amino acids rather than detecting D-amino acids in the active site. By recycling D-aminoacyl-tRNA to D-amino acids and free tRNA molecules, this enzyme counteracts the toxicity associated with the formation of D-aminoacyl-tRNA entities in vivo and helps enforce protein L-homochirality. The chain is D-aminoacyl-tRNA deacylase from Thermoanaerobacter sp. (strain X514).